The primary structure comprises 403 residues: Acetate kinase (403 aa).

Asn7 is a Mg(2+) binding site. Lys14 serves as a coordination point for ATP. Arg90 is a substrate binding site. Catalysis depends on Asp147, which acts as the Proton donor/acceptor. Residues His207–Gly211, Asp283–Arg285, and Gly331–Asn335 contribute to the ATP site. Position 386 (Glu386) interacts with Mg(2+).

It belongs to the acetokinase family. Homodimer. Mg(2+) serves as cofactor. The cofactor is Mn(2+).

The protein resides in the cytoplasm. The enzyme catalyses acetate + ATP = acetyl phosphate + ADP. It functions in the pathway metabolic intermediate biosynthesis; acetyl-CoA biosynthesis; acetyl-CoA from acetate: step 1/2. Functionally, catalyzes the formation of acetyl phosphate from acetate and ATP. Can also catalyze the reverse reaction. The protein is Acetate kinase of Thermotoga sp. (strain RQ2).